A 219-amino-acid polypeptide reads, in one-letter code: Claudin-3 (219 aa).

Over 1–8 (MSMGLEIT) the chain is Cytoplasmic. The chain crosses the membrane as a helical span at residues 9–29 (GTSLAVLGWLCTIVCCALPMW). At 30–80 (RVSAFIGSSIITAQITWEGLWMNCVVQSTGQMQCKMYDSLLALPQDLQAAR) the chain is on the extracellular side. The helical transmembrane segment at 81–101 (ALIVVSILLAAFGLLVALVGA) threads the bilayer. At 102 to 115 (QCTNCVQDETAKAK) the chain is on the cytoplasmic side. A helical membrane pass occupies residues 116–136 (ITIVAGVLFLLAALLTLVPVS). Residues 137–159 (WSANTIIRDFYNPLVPEAQKREM) are Extracellular-facing. Residues 160–180 (GAGLYVGWAAAALQLLGGALL) traverse the membrane as a helical segment. At 181-219 (CCSCPPRDKYAPTKILYSAPRSTGPGTGTGTAYDRKDYV) the chain is on the cytoplasmic side. Tyr197 is subject to Phosphotyrosine. Ser198 bears the Phosphoserine mark. The interval 218 to 219 (YV) is interactions with TJP1, TJP2 and TJP3.

This sequence belongs to the claudin family. As to quaternary structure, can form homo- and heteropolymers with other CLDN. Homopolymers interact with CLDN1 and CLDN2 homopolymers. Interacts in cis (within the same plasma membrane) with CLDN19. Directly interacts with TJP1/ZO-1, TJP2/ZO-2 and TJP3/ZO-3. In terms of assembly, (Microbial infection) Interacts with Clostridium perfringens enterotoxin CPE; the interaction may disrupt claudin assembly in tight junctions. As to expression, expressed in the lung. Expressed at high levels in the liver and at lower levels, in kidney and testis.

Its subcellular location is the cell junction. The protein resides in the tight junction. The protein localises to the cell membrane. In terms of biological role, plays a major role in tight junction-specific obliteration of the intercellular space, through calcium-independent cell-adhesion activity. This Mus musculus (Mouse) protein is Claudin-3 (Cldn3).